Reading from the N-terminus, the 491-residue chain is Malonate-semialdehyde dehydrogenase 1 (491 aa).

Residues alanine 154, phenylalanine 156, lysine 180, glutamate 183, arginine 184, serine 233, and threonine 255 each contribute to the NAD(+) site. Cysteine 288 functions as the Nucleophile in the catalytic mechanism. An NAD(+)-binding site is contributed by glutamate 386.

This sequence belongs to the aldehyde dehydrogenase family. IolA subfamily. As to quaternary structure, homotetramer.

It carries out the reaction 3-oxopropanoate + NAD(+) + CoA + H2O = hydrogencarbonate + acetyl-CoA + NADH + H(+). It catalyses the reaction 2-methyl-3-oxopropanoate + NAD(+) + CoA + H2O = propanoyl-CoA + hydrogencarbonate + NADH + H(+). It functions in the pathway polyol metabolism; myo-inositol degradation into acetyl-CoA; acetyl-CoA from myo-inositol: step 7/7. Catalyzes the oxidation of malonate semialdehyde (MSA) and methylmalonate semialdehyde (MMSA) into acetyl-CoA and propanoyl-CoA, respectively. Is involved in a myo-inositol catabolic pathway. Bicarbonate, and not CO2, is the end-product of the enzymatic reaction. The chain is Malonate-semialdehyde dehydrogenase 1 from Shouchella clausii (strain KSM-K16) (Alkalihalobacillus clausii).